A 469-amino-acid chain; its full sequence is Zinc finger CCCH domain-containing protein 30 (469 aa).

The segment at Val415 to Ser443 adopts a C3H1-type zinc-finger fold. The segment at Ala444 to Asn469 is disordered. Residues Asp449–Arg458 are compositionally biased toward basic residues.

The chain is Zinc finger CCCH domain-containing protein 30 from Oryza sativa subsp. japonica (Rice).